The following is a 111-amino-acid chain: MTRVKRGNVARKRRNKILELNRGYRGSHSTLFRTAQQRTLKALTTAYTDRRKKKRTYRRLWIRRINAAVRTKGTTYSKFIHTMKKDQIMLNRKVLSQLVILDPPSFSTLTK.

It belongs to the bacterial ribosomal protein bL20 family.

The protein localises to the plastid. It is found in the chloroplast. Binds directly to 23S ribosomal RNA and is necessary for the in vitro assembly process of the 50S ribosomal subunit. It is not involved in the protein synthesizing functions of that subunit. In Ostreococcus tauri, this protein is Large ribosomal subunit protein bL20c.